A 149-amino-acid chain; its full sequence is Large ribosomal subunit protein bL9 (149 aa).

The protein belongs to the bacterial ribosomal protein bL9 family.

In terms of biological role, binds to the 23S rRNA. This is Large ribosomal subunit protein bL9 from Vibrio vulnificus (strain CMCP6).